Consider the following 367-residue polypeptide: Anhydro-N-acetylmuramic acid kinase (367 aa).

11 to 18 (GTSLDGVD) is a binding site for ATP.

It belongs to the anhydro-N-acetylmuramic acid kinase family.

It carries out the reaction 1,6-anhydro-N-acetyl-beta-muramate + ATP + H2O = N-acetyl-D-muramate 6-phosphate + ADP + H(+). It functions in the pathway amino-sugar metabolism; 1,6-anhydro-N-acetylmuramate degradation. The protein operates within cell wall biogenesis; peptidoglycan recycling. Functionally, catalyzes the specific phosphorylation of 1,6-anhydro-N-acetylmuramic acid (anhMurNAc) with the simultaneous cleavage of the 1,6-anhydro ring, generating MurNAc-6-P. Is required for the utilization of anhMurNAc either imported from the medium or derived from its own cell wall murein, and thus plays a role in cell wall recycling. The polypeptide is Anhydro-N-acetylmuramic acid kinase (Bradyrhizobium diazoefficiens (strain JCM 10833 / BCRC 13528 / IAM 13628 / NBRC 14792 / USDA 110)).